The chain runs to 316 residues: tRNA dimethylallyltransferase (316 aa).

ATP is bound at residue 17–24 (GPTASGKT). 19–24 (TASGKT) lines the substrate pocket. Interaction with substrate tRNA regions lie at residues 42–45 (DSAL), 166–170 (QRLSR), and 247–252 (RCVGYR).

It belongs to the IPP transferase family. As to quaternary structure, monomer. Requires Mg(2+) as cofactor.

It catalyses the reaction adenosine(37) in tRNA + dimethylallyl diphosphate = N(6)-dimethylallyladenosine(37) in tRNA + diphosphate. Functionally, catalyzes the transfer of a dimethylallyl group onto the adenine at position 37 in tRNAs that read codons beginning with uridine, leading to the formation of N6-(dimethylallyl)adenosine (i(6)A). The polypeptide is tRNA dimethylallyltransferase (Citrobacter koseri (strain ATCC BAA-895 / CDC 4225-83 / SGSC4696)).